The following is a 141-amino-acid chain: Organic hydroperoxide resistance protein OhrA (141 aa).

The protein belongs to the OsmC/Ohr family.

Its function is as follows. Involved in organic hydroperoxide resistance. The sequence is that of Organic hydroperoxide resistance protein OhrA (ohrA) from Bacillus subtilis (strain 168).